The following is a 221-amino-acid chain: Histone H1.3 (221 aa).

Positions methionine 1–lysine 17 are enriched in low complexity. The interval methionine 1–glutamate 43 is disordered. Serine 2 is subject to N-acetylserine. Residue serine 2 is modified to Phosphoserine. Lysine 17 is modified (N6-acetyllysine). Phosphothreonine is present on threonine 18. Residues valine 20–alanine 36 show a composition bias toward basic residues. N6-(beta-hydroxybutyryl)lysine is present on residues lysine 35, lysine 47, and lysine 53. One can recognise an H15 domain in the interval serine 37–lysine 110. Arginine 55 carries the post-translational modification Citrulline. Lysine 65, lysine 76, lysine 86, and lysine 91 each carry N6-(beta-hydroxybutyryl)lysine. A disordered region spans residues serine 90 to lysine 221. Serine 105 is modified (phosphoserine; by PKC). Lysine 107 is modified (N6-(beta-hydroxybutyryl)lysine). Composition is skewed to basic residues over residues lysine 120–lysine 141, lysine 150–lysine 161, and lysine 170–lysine 179. Position 170 is an N6-(beta-hydroxybutyryl)lysine (lysine 170). A compositionally biased stretch (low complexity) spans threonine 180–alanine 193. Over residues lysine 194–lysine 221 the composition is skewed to basic residues.

Belongs to the histone H1/H5 family. H1 histones are progressively phosphorylated during the cell cycle, becoming maximally phosphorylated during late G2 phase and M phase, and being dephosphorylated sharply thereafter. Post-translationally, citrullination at Arg-55 (H1R54ci) by PADI4 takes place within the DNA-binding site of H1 and results in its displacement from chromatin and global chromatin decondensation, thereby promoting pluripotency and stem cell maintenance.

Its subcellular location is the nucleus. It localises to the chromosome. Histone H1 protein binds to linker DNA between nucleosomes forming the macromolecular structure known as the chromatin fiber. Histones H1 are necessary for the condensation of nucleosome chains into higher-order structured fibers. Also acts as a regulator of individual gene transcription through chromatin remodeling, nucleosome spacing and DNA methylation. This is Histone H1.3 from Homo sapiens (Human).